Here is a 352-residue protein sequence, read N- to C-terminus: Glycerol-3-phosphate dehydrogenase 1-like protein (352 aa).

13 to 18 (GSGNWG) is an NAD(+) binding site. Residue Lys123 participates in substrate binding. Residue Ala156 coordinates NAD(+). Lys207 (proton acceptor) is an active-site residue. 3 residues coordinate NAD(+): Arg272, Lys299, and Gln301. Residue 272–273 (RN) coordinates substrate.

Belongs to the NAD-dependent glycerol-3-phosphate dehydrogenase family.

Its subcellular location is the cytoplasm. The enzyme catalyses sn-glycerol 3-phosphate + NAD(+) = dihydroxyacetone phosphate + NADH + H(+). Functionally, plays a role in regulating cardiac sodium current. This is Glycerol-3-phosphate dehydrogenase 1-like protein (gpd1l) from Xenopus tropicalis (Western clawed frog).